A 46-amino-acid chain; its full sequence is Large ribosomal subunit protein bL36 (46 aa).

It belongs to the bacterial ribosomal protein bL36 family.

In Klebsiella pneumoniae (strain 342), this protein is Large ribosomal subunit protein bL36.